Consider the following 445-residue polypeptide: MRALVLAAGKGTRMKSKIPKVLHPLSGRPMIEWVIETAGKVAQKVGVVLGFEAELVRKALPEWVDVFVQGEQLGTAHAVMCAKDFIEPGDDVLILYGDVPLISENTLKRMIEEHRKGADVTILVADLEDPSGYGRVIQDGDKYRIIEDTDLPEELKSVTTINTGFYVFSGDFLLRALPEIKNENAKGEYYLTDAVNFAEKVRVVRTDDLLEITGVNTRKTLVWLEEQLRMRKIEELLENGVTILDPATTYIHYSVEIGMDTVIYPMTFIEGKSRVGENCEIGPMTRIVDCEIGNNVKITRSECFKSVIEDDVSVGPFARLREGTILKKSSKIGNFVEIKKSTIGEGTKAQHLSYIGDAFVGKNVNVGAGTITCNYDGKKKNPTFIEDGAFIGSNSSLVAPVRIGKGALIGAGSVITEDVPPYSLGLGRARQVVKEGWVLKKRKEE.

Residues 1-218 (MRALVLAAGK…LLEITGVNTR (218 aa)) form a pyrophosphorylase region. UDP-N-acetyl-alpha-D-glucosamine contacts are provided by residues 6 to 9 (LAAG), Lys20, Gln69, 74 to 75 (GT), 96 to 98 (YGD), Gly134, Glu147, Asn162, and Asn216. Asp98 contacts Mg(2+). Asn216 is a binding site for Mg(2+). Residues 219 to 239 (KTLVWLEEQLRMRKIEELLEN) are linker. Residues 240 to 445 (GVTILDPATT…GWVLKKRKEE (206 aa)) form an N-acetyltransferase region. Arg321 and Lys339 together coordinate UDP-N-acetyl-alpha-D-glucosamine. The Proton acceptor role is filled by His351. Residues Tyr354 and Asn365 each contribute to the UDP-N-acetyl-alpha-D-glucosamine site. Residues Ala368, 374–375 (NY), Ser393, Ala411, and Arg428 contribute to the acetyl-CoA site.

This sequence in the N-terminal section; belongs to the N-acetylglucosamine-1-phosphate uridyltransferase family. The protein in the C-terminal section; belongs to the transferase hexapeptide repeat family. As to quaternary structure, homotrimer. The cofactor is Mg(2+).

The protein localises to the cytoplasm. It carries out the reaction alpha-D-glucosamine 1-phosphate + acetyl-CoA = N-acetyl-alpha-D-glucosamine 1-phosphate + CoA + H(+). It catalyses the reaction N-acetyl-alpha-D-glucosamine 1-phosphate + UTP + H(+) = UDP-N-acetyl-alpha-D-glucosamine + diphosphate. Its pathway is nucleotide-sugar biosynthesis; UDP-N-acetyl-alpha-D-glucosamine biosynthesis; N-acetyl-alpha-D-glucosamine 1-phosphate from alpha-D-glucosamine 6-phosphate (route II): step 2/2. It participates in nucleotide-sugar biosynthesis; UDP-N-acetyl-alpha-D-glucosamine biosynthesis; UDP-N-acetyl-alpha-D-glucosamine from N-acetyl-alpha-D-glucosamine 1-phosphate: step 1/1. The protein operates within bacterial outer membrane biogenesis; LPS lipid A biosynthesis. Catalyzes the last two sequential reactions in the de novo biosynthetic pathway for UDP-N-acetylglucosamine (UDP-GlcNAc). The C-terminal domain catalyzes the transfer of acetyl group from acetyl coenzyme A to glucosamine-1-phosphate (GlcN-1-P) to produce N-acetylglucosamine-1-phosphate (GlcNAc-1-P), which is converted into UDP-GlcNAc by the transfer of uridine 5-monophosphate (from uridine 5-triphosphate), a reaction catalyzed by the N-terminal domain. This Thermotoga maritima (strain ATCC 43589 / DSM 3109 / JCM 10099 / NBRC 100826 / MSB8) protein is Bifunctional protein GlmU.